Reading from the N-terminus, the 107-residue chain is UPF0145 protein ESA_02470 (107 aa).

This sequence belongs to the UPF0145 family.

This Cronobacter sakazakii (strain ATCC BAA-894) (Enterobacter sakazakii) protein is UPF0145 protein ESA_02470.